Consider the following 423-residue polypeptide: MSERPLPLNVYFSTINSAVARSNSVLLAKNLSIPWGKTLTSVLNFDIPGTYSSDDVLKLTVERSISKNWTDIVLLHLQVLLYLVRDHDPAAAFKQQTELAQHLYREFSSGRCTGVHLPVLFIVCKDLRFLAINAHNAMLRRKQQLKVISVDESEENEQLEATARLINRAFTICINDRAPLSTSRKWGAYYIMGLLFKLYLRLDCVHLTNNVLRAMKVVELPDISLFPKSHVVIFHYYLGIVAFLNQNYKNASAELEIAFSLCHKGYNRNLELILSYWIPTRILVNHQLPTKNLLSKFPNLASVYIPLTRALKSGNLGEFGKCLQKNETLLAKTKIYLTLEGTRDLCIRNLFRKTWIICGKSTRLPVSVFQIALQVAGTDLPKLHVEAILANMISKGYMRGYISRNFETVVLSAKDPFPKNVST.

The 185-residue stretch at 232–416 (VIFHYYLGIV…ETVVLSAKDP (185 aa)) folds into the PCI domain.

This sequence belongs to the CSN12 family.

This is Protein CSN12 homolog (csn12) from Schizosaccharomyces pombe (strain 972 / ATCC 24843) (Fission yeast).